A 354-amino-acid chain; its full sequence is mRNA cap guanine-N(7) methyltransferase 2 (354 aa).

The mRNA cap 0 methyltransferase domain maps to 8-286 (KPEQSHHRLF…LYATFIFQKP (279 aa)). S-adenosyl-L-methionine-binding positions include K21, D61, and 88–89 (DP).

This sequence belongs to the class I-like SAM-binding methyltransferase superfamily. mRNA cap 0 methyltransferase family.

Its subcellular location is the nucleus. The enzyme catalyses a 5'-end (5'-triphosphoguanosine)-ribonucleoside in mRNA + S-adenosyl-L-methionine = a 5'-end (N(7)-methyl 5'-triphosphoguanosine)-ribonucleoside in mRNA + S-adenosyl-L-homocysteine. MRNA capping methyltransferase that methylates the N7 position of the added guanosine to the 5'-cap structure of mRNAs. Binds RNA containing 5'-terminal GpppC. In Arabidopsis thaliana (Mouse-ear cress), this protein is mRNA cap guanine-N(7) methyltransferase 2.